A 503-amino-acid chain; its full sequence is Activin receptor type-1-like (503 aa).

A signal peptide spans 1–21 (MTLGSPRRGLLMLLMALVTQG). The Extracellular segment spans residues 22–118 (DPVKPSRGPL…PSEQPGTDGQ (97 aa)). 3 disulfide bridges follow: Cys-34–Cys-51, Cys-36–Cys-41, and Cys-46–Cys-69. The segment at 73 to 76 (HREL) is mediates specificity for BMP ligand. 2 disulfide bridges follow: Cys-77–Cys-89 and Cys-90–Cys-95. A glycan (N-linked (GlcNAc...) asparagine) is linked at Asn-98. The chain crosses the membrane as a helical span at residues 119-141 (LALILGPVLALLALVALGVLGLW). The Cytoplasmic segment spans residues 142–503 (HVRRRQEKQR…NSPEKPKVIQ (362 aa)). A phosphoserine mark is found at Ser-155, Ser-160, and Ser-161. One can recognise a GS domain in the interval 172 to 201 (SMLGDLLDSDCTTGSGSGLPFLVQRTVARQ). The Protein kinase domain maps to 202-492 (VALVECVGKG…LRIKKTLQKI (291 aa)). ATP is bound by residues 208–216 (VGKGRYGEV) and Lys-229. The active-site Proton acceptor is Asp-330.

The protein belongs to the protein kinase superfamily. TKL Ser/Thr protein kinase family. TGFB receptor subfamily. As to quaternary structure, interacts with TSC22D1/TSC-22. Mg(2+) serves as cofactor. Requires Mn(2+) as cofactor.

It is found in the cell membrane. It carries out the reaction L-threonyl-[receptor-protein] + ATP = O-phospho-L-threonyl-[receptor-protein] + ADP + H(+). The enzyme catalyses L-seryl-[receptor-protein] + ATP = O-phospho-L-seryl-[receptor-protein] + ADP + H(+). Its function is as follows. Type I receptor for TGF-beta family ligands BMP9/GDF2 and BMP10 and important regulator of normal blood vessel development. On ligand binding, forms a receptor complex consisting of two type II and two type I transmembrane serine/threonine kinases. Type II receptors phosphorylate and activate type I receptors which autophosphorylate, then bind and activate SMAD transcriptional regulators. May bind activin as well. This is Activin receptor type-1-like (ACVRL1) from Pongo abelii (Sumatran orangutan).